A 256-amino-acid chain; its full sequence is Ubiquinone/menaquinone biosynthesis C-methyltransferase UbiE (256 aa).

S-adenosyl-L-methionine is bound by residues Thr-79, Asp-100, and 128-129 (DA).

This sequence belongs to the class I-like SAM-binding methyltransferase superfamily. MenG/UbiE family.

It carries out the reaction a 2-demethylmenaquinol + S-adenosyl-L-methionine = a menaquinol + S-adenosyl-L-homocysteine + H(+). The enzyme catalyses a 2-methoxy-6-(all-trans-polyprenyl)benzene-1,4-diol + S-adenosyl-L-methionine = a 5-methoxy-2-methyl-3-(all-trans-polyprenyl)benzene-1,4-diol + S-adenosyl-L-homocysteine + H(+). It participates in quinol/quinone metabolism; menaquinone biosynthesis; menaquinol from 1,4-dihydroxy-2-naphthoate: step 2/2. Its pathway is cofactor biosynthesis; ubiquinone biosynthesis. Methyltransferase required for the conversion of demethylmenaquinol (DMKH2) to menaquinol (MKH2) and the conversion of 2-polyprenyl-6-methoxy-1,4-benzoquinol (DDMQH2) to 2-polyprenyl-3-methyl-6-methoxy-1,4-benzoquinol (DMQH2). The polypeptide is Ubiquinone/menaquinone biosynthesis C-methyltransferase UbiE (Pseudomonas fluorescens (strain Pf0-1)).